Reading from the N-terminus, the 123-residue chain is Methicillin resistance regulatory protein MecI (123 aa).

The H-T-H motif DNA-binding region spans 7–71; it reads EISSAEWEVM…KDNKIFQYYS (65 aa). Residues 74–123 are important for dimerization; that stretch reads EESDIKYKTSKNFINKVYKGGFNSLVLNFVEKEDLSQDEIEELRNILNKK.

Belongs to the BlaI transcriptional regulatory family. Monomer and homodimer. Upon exposure to beta-lactams, proteolytic cleavage at a single site impairs dimerization and abolishes repressor activity.

It is found in the cytoplasm. Its function is as follows. Transcriptional repressor that constitutively blocks the transcription of the gene for the penicillin-binding protein MecA. Binds palindromic DNA with the sequence 5'-TACA-[AT]-N-TGTA-3'. Regulates genes involved in antibiotic resistance. Binds DNA as a dimer. The polypeptide is Methicillin resistance regulatory protein MecI (mecI) (Staphylococcus aureus (strain N315)).